Reading from the N-terminus, the 384-residue chain is Odorant receptor 33c (384 aa).

The Cytoplasmic segment spans residues 1–35 (MVIIDSLSFYRPFWICMRLLVPTFFKDSSRPVQLY). The chain crosses the membrane as a helical span at residues 36–56 (VVLLHILVTLWFPLHLLLHLL). Residues 57–63 (LLPSTAE) are Extracellular-facing. Residues 64-84 (FFKNLTMSLTCVACSLKHVAH) form a helical membrane-spanning segment. The Cytoplasmic portion of the chain corresponds to 85 to 128 (LYHLPQIVEIESLIEQLDTFIASEQEHRYYRDHVHCHARRFTRC). Residues 129–149 (LYISFGMIYALFLFGVFVQVI) form a helical membrane-spanning segment. Residues 150–169 (SGNWELLYPAYFPFDLESNR) lie on the Extracellular side of the membrane. Residues 170–190 (FLGAVALGYQVFSMLVEGFQG) traverse the membrane as a helical segment. Over 191 to 251 (LGNDTYTPLT…LVRFHNLVSR (61 aa)) the chain is Cytoplasmic. A helical membrane pass occupies residues 252–272 (TISEVQLVQLGGCGATLCIIV). The Extracellular portion of the chain corresponds to 273–274 (SY). The chain crosses the membrane as a helical span at residues 275–295 (MLFFVGDTISLVYYLVFFGVV). Topologically, residues 296-358 (CVQLFPSCYF…WIIKAGGLIE (63 aa)) are cytoplasmic. A helical membrane pass occupies residues 359-379 (LNLNAFFATLKMAYSLFAVVV). The Extracellular segment spans residues 380-384 (RAKGI).

The protein belongs to the insect chemoreceptor superfamily. Heteromeric odorant receptor channel (TC 1.A.69) family. Or2a subfamily. In terms of assembly, interacts with Orco. Complexes exist early in the endomembrane system in olfactory sensory neurons (OSNs), coupling these complexes to the conserved ciliary trafficking pathway. Expressed in the antenna and in a subset of 18 olfactory receptor neurons in the maxillary palp.

It localises to the cell membrane. Odorant receptor which mediates acceptance or avoidance behavior, depending on its substrates. The odorant receptor repertoire encodes a large collection of odor stimuli that vary widely in identity, intensity, and duration. May form a complex with Orco to form odorant-sensing units, providing sensitive and prolonged odorant signaling and calcium permeability. This chain is Odorant receptor 33c (Or33c), found in Drosophila melanogaster (Fruit fly).